Reading from the N-terminus, the 310-residue chain is GTPase Era (310 aa).

Residues 17–184 (HSGFVALIGA…LDYLAQALPA (168 aa)) enclose the Era-type G domain. A G1 region spans residues 25-32 (GAPNAGKS). Position 25 to 32 (25 to 32 (GAPNAGKS)) interacts with GTP. Residues 51 to 55 (QTTRA) are G2. Residues 72–75 (DTPG) are G3. Residues 72 to 76 (DTPGI) and 134 to 137 (NKVD) each bind GTP. The interval 134–137 (NKVD) is G4. Residues 163–165 (VSA) are G5. The KH type-2 domain maps to 215–292 (LHQELPYSSH…HLFLFVKVRE (78 aa)).

It belongs to the TRAFAC class TrmE-Era-EngA-EngB-Septin-like GTPase superfamily. Era GTPase family. As to quaternary structure, monomer.

The protein localises to the cytoplasm. The protein resides in the cell inner membrane. Functionally, an essential GTPase that binds both GDP and GTP, with rapid nucleotide exchange. Plays a role in 16S rRNA processing and 30S ribosomal subunit biogenesis and possibly also in cell cycle regulation and energy metabolism. The sequence is that of GTPase Era from Mesorhizobium japonicum (strain LMG 29417 / CECT 9101 / MAFF 303099) (Mesorhizobium loti (strain MAFF 303099)).